The chain runs to 469 residues: Probable periplasmic serine endoprotease DegP-like (469 aa).

The signal sequence occupies residues 1-25 (MNRLLKQVCMVVVSSFMMASMLTHA). Catalysis depends on charge relay system residues His-114, Asp-144, and Ser-217. Residues 215 to 217 (GNS) and 272 to 276 (LGVLI) contribute to the substrate site. 2 PDZ domains span residues 261–352 (LKSD…YRDG) and 358–458 (SVTL…IRQG).

Belongs to the peptidase S1C family.

The protein localises to the periplasm. It carries out the reaction Acts on substrates that are at least partially unfolded. The cleavage site P1 residue is normally between a pair of hydrophobic residues, such as Val-|-Val.. Functionally, might be efficient in the degradation of transiently denatured and unfolded proteins which accumulate in the periplasm following stress conditions. In Marinomonas sp. (strain MWYL1), this protein is Probable periplasmic serine endoprotease DegP-like.